Reading from the N-terminus, the 243-residue chain is Probable transcriptional regulatory protein BG0025 (243 aa).

Belongs to the TACO1 family.

The protein localises to the cytoplasm. This Borrelia garinii subsp. bavariensis (strain ATCC BAA-2496 / DSM 23469 / PBi) (Borreliella bavariensis) protein is Probable transcriptional regulatory protein BG0025.